We begin with the raw amino-acid sequence, 1410 residues long: Endoribonuclease Dicer homolog 2a (1410 aa).

Residues Met-1–Gly-15 show a composition bias toward gly residues. Residues Met-1–Pro-30 form a disordered region. The region spanning Ala-41–Ile-222 is the Helicase ATP-binding domain. Leu-54–Thr-61 lines the ATP pocket. The short motif at Asp-163 to His-166 is the DECH box element. Residues Thr-388–Arg-561 form the Helicase C-terminal domain. Positions Ser-569–Glu-655 constitute a Dicer dsRNA-binding fold domain. A PAZ domain is found at Lys-827 to Met-942. 2 consecutive RNase III domains span residues Ser-969–Gly-1124 and Val-1161–Lys-1308. Mg(2+) contacts are provided by Glu-1200, Asp-1294, and Glu-1297. The region spanning Asp-1334–Ala-1400 is the DRBM domain.

The protein belongs to the helicase family. Dicer subfamily. As to quaternary structure, may interact with ARGONAUTE1 or PINHEAD through their common PAZ domains. Mg(2+) serves as cofactor. The cofactor is Mn(2+).

It localises to the nucleus. Probably involved in the RNA silencing pathway. May cleave double-stranded RNA to produce short 21-24 nucleotides (nt) RNAs which target the selective destruction of complementary RNAs. The sequence is that of Endoribonuclease Dicer homolog 2a (DCL2A) from Oryza sativa subsp. japonica (Rice).